Here is a 415-residue protein sequence, read N- to C-terminus: uncharacterized protein (415 aa).

The 52-residue stretch at Met-1–Ala-52 folds into the TRAM domain. Residues Cys-62, Cys-68, Cys-71, and Cys-147 each coordinate [4Fe-4S] cluster. Residues Gln-252, Tyr-279, Glu-299, and Asp-347 each contribute to the S-adenosyl-L-methionine site. The Nucleophile role is filled by Cys-373.

It belongs to the class I-like SAM-binding methyltransferase superfamily. RNA M5U methyltransferase family.

This is an uncharacterized protein from Caulobacter vibrioides (strain ATCC 19089 / CIP 103742 / CB 15) (Caulobacter crescentus).